A 209-amino-acid polypeptide reads, in one-letter code: Cerebral peptide 1 (209 aa).

Positions 1-20 are cleaved as a signal peptide; that stretch reads MLLAKISVVVLLLAIDGTSS. The span at 21–39 shows a compositional bias: polar residues; it reads SESTDNVVLSSSPDSQKAA. Residues 21–43 constitute a propeptide, connecting peptide 1; the sequence is SESTDNVVLSSSPDSQKAATSRH. Residues 21–56 form a disordered region; the sequence is SESTDNVVLSSSPDSQKAATSRHKRAPGWGKRSSLN. Tryptophan amide is present on Trp49. Positions 53–77 are cleaved as a propeptide — connecting peptide 2; sequence SSLNDEDLFADSDSAQELLDSVAAL. Tryptophan amide is present on residues Trp83 and Trp105. The interval 98 to 169 is disordered; sequence EAKRAPGWGK…APGWGKRSGG (72 aa). Residues 109 to 122 constitute a propeptide, connecting peptide 4; that stretch reads GQEIDVDEDGSEQE. 6 positions are modified to tryptophan amide: Trp128, Trp135, Trp142, Trp149, Trp156, and Trp163. Positions 167 to 191 are cleaved as a propeptide — connecting peptide 5; the sequence is SGGDYCETLEKMVDAYIYKAVEVDS. A disulfide bridge connects residues Cys172 and Cys197.

Homodimer; disulfide-linked. Cerebral peptide 1 is expressed in the cerebral, pedal and buccal ganglia and B1 and B2 neurons. APGW-amide is expressed in buccal ganglia and several neurons.

The protein localises to the secreted. Functionally, may function as a peptide transmitter. In Aplysia californica (California sea hare), this protein is Cerebral peptide 1.